Here is a 127-residue protein sequence, read N- to C-terminus: Large ribosomal subunit protein bL12 (127 aa).

Positions 98 to 127 are disordered; it reads PKPVKNGVSKEEAEEAKKQLVESGAEVEIK. Positions 105–117 are enriched in basic and acidic residues; that stretch reads VSKEEAEEAKKQL.

The protein belongs to the bacterial ribosomal protein bL12 family. In terms of assembly, homodimer. Part of the ribosomal stalk of the 50S ribosomal subunit. Forms a multimeric L10(L12)X complex, where L10 forms an elongated spine to which 2 to 4 L12 dimers bind in a sequential fashion. Binds GTP-bound translation factors.

Functionally, forms part of the ribosomal stalk which helps the ribosome interact with GTP-bound translation factors. Is thus essential for accurate translation. In Geobacter sulfurreducens (strain ATCC 51573 / DSM 12127 / PCA), this protein is Large ribosomal subunit protein bL12.